The following is a 221-amino-acid chain: Tetraspanin-2 (221 aa).

At 1–13 (MGRFRGGLRCIKY) the chain is on the cytoplasmic side. The chain crosses the membrane as a helical span at residues 14 to 34 (LLLGFNLLFWLAGSAVIAFGL). Topologically, residues 35-54 (WFRFGGTIKDLSSEEKSPEY) are extracellular. Residues 55–75 (FYVGLYVLVGAGALMMAVGFF) traverse the membrane as a helical segment. Residues 76 to 90 (GCCGAMRESQCVLGS) lie on the Cytoplasmic side of the membrane. Residues 91–111 (FFTCLLVIFAAEVTTGVFAFI) traverse the membrane as a helical segment. The Extracellular portion of the chain corresponds to 112–188 (GKDVAIRHVQ…ETIISVKLQL (77 aa)). N-linked (GlcNAc...) asparagine glycosylation is present at N139. A helical transmembrane segment spans residues 189–209 (IGIVGIGIAGLTIFGMIFSMV). Residues 210-221 (LCCAIRNSRDVI) are Cytoplasmic-facing.

This sequence belongs to the tetraspanin (TM4SF) family. As to expression, expression is restricted to the nervous system.

It localises to the membrane. In terms of biological role, may play a role in signalling in oligodendrocytes in the early stages of their terminal differentiation into myelin-forming glia and may also function in stabilizing the mature sheath. The chain is Tetraspanin-2 (Tspan2) from Rattus norvegicus (Rat).